The following is a 444-amino-acid chain: MAESLHIVGAGMAGSEAAWQAAEMGVPVVLHEMRPKVGTFAHRTGQFAEMVCSNSFRSDDDERNAVGLLHWEMRAARGLIMEMAAAHRLPAGGALAVDRDPFAESVTGRLRAHPLISVVEEEVADLPSSGNWIVATGPLTSSALAESLRALTGAEALAFFDAIAPIVYAETIDMEVAWRQSRYDKGETEDERTAYINCPMNREQYEAFIDALLAAEKTEFHEGETAGYFDGCLPIEVMAERGRETLRHGPMKPVGLTNSHRPEEKAHAVVQLRRDNKLGTLYNIVGFQTKMKYGAQTAVFKMIPGLENASFARLGGIHRNTFLNSPTLLDDRMRLKLRPNIRFAGQVTGVEGYVESAAMGLLAGRMAAAEILGRDLPPPPPETAMGALVTHITGGAEAKSFQPMNVNFGLFPPIDARGGRRGRKDRYKAYTDRAKAAFTEWLGA.

9 to 14 provides a ligand contact to FAD; that stretch reads GAGMAG.

This sequence belongs to the MnmG family. TrmFO subfamily. FAD is required as a cofactor.

It localises to the cytoplasm. It catalyses the reaction uridine(54) in tRNA + (6R)-5,10-methylene-5,6,7,8-tetrahydrofolate + NADH + H(+) = 5-methyluridine(54) in tRNA + (6S)-5,6,7,8-tetrahydrofolate + NAD(+). The catalysed reaction is uridine(54) in tRNA + (6R)-5,10-methylene-5,6,7,8-tetrahydrofolate + NADPH + H(+) = 5-methyluridine(54) in tRNA + (6S)-5,6,7,8-tetrahydrofolate + NADP(+). Its function is as follows. Catalyzes the folate-dependent formation of 5-methyl-uridine at position 54 (M-5-U54) in all tRNAs. This is Methylenetetrahydrofolate--tRNA-(uracil-5-)-methyltransferase TrmFO from Cereibacter sphaeroides (strain ATCC 17023 / DSM 158 / JCM 6121 / CCUG 31486 / LMG 2827 / NBRC 12203 / NCIMB 8253 / ATH 2.4.1.) (Rhodobacter sphaeroides).